A 278-amino-acid polypeptide reads, in one-letter code: 4-deoxy-L-threo-5-hexosulose-uronate ketol-isomerase (278 aa).

Zn(2+) contacts are provided by histidine 196, histidine 198, glutamate 203, and histidine 245.

Belongs to the KduI family. In terms of assembly, homohexamer. Requires Zn(2+) as cofactor.

It catalyses the reaction 5-dehydro-4-deoxy-D-glucuronate = 3-deoxy-D-glycero-2,5-hexodiulosonate. It functions in the pathway glycan metabolism; pectin degradation; 2-dehydro-3-deoxy-D-gluconate from pectin: step 4/5. Its function is as follows. Catalyzes the isomerization of 5-dehydro-4-deoxy-D-glucuronate to 3-deoxy-D-glycero-2,5-hexodiulosonate. This is 4-deoxy-L-threo-5-hexosulose-uronate ketol-isomerase from Escherichia coli (strain 55989 / EAEC).